Consider the following 35-residue polypeptide: MSDIN-like toxin proprotein 1 (35 aa).

A propeptide spanning residues 1 to 10 (MSDINATRLP) is cleaved from the precursor. The cyclopeptide (Ile-Pro) cross-link spans 11–20 (IIIVLGLIIP). Residues 21–35 (LCVSDIEMILTRGER) constitute a propeptide that is removed on maturation.

It belongs to the MSDIN fungal toxin family. In terms of processing, processed by the macrocyclase-peptidase enzyme POPB to yield a toxic cyclic decapeptide. POPB first removes 10 residues from the N-terminus. Conformational trapping of the remaining peptide forces the enzyme to release this intermediate rather than proceed to macrocyclization. The enzyme rebinds the remaining peptide in a different conformation and catalyzes macrocyclization of the N-terminal 10 residues.

Functionally, probable toxin that belongs to the MSDIN-like toxin family responsible for a large number of food poisoning cases and deaths. The chain is MSDIN-like toxin proprotein 1 from Amanita rimosa.